A 486-amino-acid chain; its full sequence is Secreted protein C (486 aa).

Residues M1 to A22 form the signal peptide. Residues G30–H332 form a disordered region. A glycan (N-linked (GlcNAc...) asparagine) is linked at N37. Residues S41–Q60 are compositionally biased toward gly residues. The span at S61 to S318 shows a compositional bias: low complexity. N73, N74, N83, N112, N129, N149, and N174 each carry an N-linked (GlcNAc...) asparagine glycan.

Belongs to the Sct family.

Its subcellular location is the secreted. This chain is Secreted protein C, found in Dictyostelium discoideum (Social amoeba).